The primary structure comprises 99 residues: Cell division protein FtsB (99 aa).

The Cytoplasmic portion of the chain corresponds to 1-3 (MRV). The helical transmembrane segment at 4-21 (FTAILLILLVLLQYRLWF) threads the bilayer. Over 22–99 (GKNSVPDYLV…KENSTRNVNN (78 aa)) the chain is Periplasmic. Residues 29–53 (YLVLKENVVRQQSANEKLQQRNKLL) are a coiled coil.

Belongs to the FtsB family. In terms of assembly, part of a complex composed of FtsB, FtsL and FtsQ.

Its subcellular location is the cell inner membrane. Its function is as follows. Essential cell division protein. May link together the upstream cell division proteins, which are predominantly cytoplasmic, with the downstream cell division proteins, which are predominantly periplasmic. In Colwellia psychrerythraea (strain 34H / ATCC BAA-681) (Vibrio psychroerythus), this protein is Cell division protein FtsB.